A 386-amino-acid chain; its full sequence is Oxysterol-binding protein-related protein 4A (386 aa).

It belongs to the OSBP family. As to expression, expressed in roots, stems and flowers.

May be involved in the transport of sterols. This is Oxysterol-binding protein-related protein 4A (ORP4A) from Arabidopsis thaliana (Mouse-ear cress).